The primary structure comprises 235 residues: Peptidyl-tRNA hydrolase (235 aa).

Tyr14 provides a ligand contact to tRNA. The active-site Proton acceptor is His19. TRNA-binding residues include Phe64, Asn66, and Asn112. The tract at residues 188 to 235 is disordered; sequence APARNSGTRPDNPGKGSPEKPAAKPANDPIAEPPSLSDRLRALTERFR. Over residues 225-235 the composition is skewed to basic and acidic residues; sequence DRLRALTERFR.

The protein belongs to the PTH family. In terms of assembly, monomer.

It localises to the cytoplasm. It carries out the reaction an N-acyl-L-alpha-aminoacyl-tRNA + H2O = an N-acyl-L-amino acid + a tRNA + H(+). Its function is as follows. Hydrolyzes ribosome-free peptidyl-tRNAs (with 1 or more amino acids incorporated), which drop off the ribosome during protein synthesis, or as a result of ribosome stalling. In terms of biological role, catalyzes the release of premature peptidyl moieties from peptidyl-tRNA molecules trapped in stalled 50S ribosomal subunits, and thus maintains levels of free tRNAs and 50S ribosomes. The polypeptide is Peptidyl-tRNA hydrolase (Paracoccus denitrificans (strain Pd 1222)).